The chain runs to 159 residues: Ecotin (159 aa).

An N-terminal signal peptide occupies residues 1–22 (MRPTPLSTILALTMAATAPAMA). Cys68 and Cys105 form a disulfide bridge.

It belongs to the protease inhibitor I11 (ecotin) family. In terms of assembly, homodimer.

It localises to the periplasm. In terms of biological role, general inhibitor of family S1 serine proteases. This is Ecotin from Pseudomonas putida (strain W619).